A 456-amino-acid chain; its full sequence is Probable galactarate/D-glucarate transporter GudP (456 aa).

The next 10 membrane-spanning stretches (helical) occupy residues 11–31 (YLIL…RATI), 51–71 (YIFS…GWLL), 78–96 (KVYA…LQGY), 102–119 (ISTA…VGLA), 246–266 (IYLG…WFPV), 280–300 (GIIA…GGVI), 317–337 (TPIV…YVDA), 341–361 (VVCF…GWAV), 381–401 (FGNL…AATG), and 408–428 (SSWV…VGEI).

The protein belongs to the major facilitator superfamily. Phthalate permease family.

Its subcellular location is the cell inner membrane. It catalyses the reaction galactarate(in) + H(+)(in) = galactarate(out) + H(+)(out). The catalysed reaction is D-glucarate(in) + H(+)(in) = D-glucarate(out) + H(+)(out). Functionally, probably involved in the uptake of galactarate and/or D-glucarate. This Pseudomonas putida (Arthrobacter siderocapsulatus) protein is Probable galactarate/D-glucarate transporter GudP (gudP).